We begin with the raw amino-acid sequence, 197 residues long: Holliday junction branch migration complex subunit RuvA (197 aa).

Residues methionine 1–arginine 62 are domain I. Residues serine 63–glutamate 141 are domain II. The interval glutamate 141–alanine 145 is flexible linker. Residues glutamine 146–arginine 197 form a domain III region.

This sequence belongs to the RuvA family. In terms of assembly, homotetramer. Forms an RuvA(8)-RuvB(12)-Holliday junction (HJ) complex. HJ DNA is sandwiched between 2 RuvA tetramers; dsDNA enters through RuvA and exits via RuvB. An RuvB hexamer assembles on each DNA strand where it exits the tetramer. Each RuvB hexamer is contacted by two RuvA subunits (via domain III) on 2 adjacent RuvB subunits; this complex drives branch migration. In the full resolvosome a probable DNA-RuvA(4)-RuvB(12)-RuvC(2) complex forms which resolves the HJ.

The protein localises to the cytoplasm. Its function is as follows. The RuvA-RuvB-RuvC complex processes Holliday junction (HJ) DNA during genetic recombination and DNA repair, while the RuvA-RuvB complex plays an important role in the rescue of blocked DNA replication forks via replication fork reversal (RFR). RuvA specifically binds to HJ cruciform DNA, conferring on it an open structure. The RuvB hexamer acts as an ATP-dependent pump, pulling dsDNA into and through the RuvAB complex. HJ branch migration allows RuvC to scan DNA until it finds its consensus sequence, where it cleaves and resolves the cruciform DNA. The chain is Holliday junction branch migration complex subunit RuvA from Exiguobacterium sibiricum (strain DSM 17290 / CCUG 55495 / CIP 109462 / JCM 13490 / 255-15).